The chain runs to 433 residues: Glutamate-1-semialdehyde 2,1-aminomutase (433 aa).

Lys-273 carries the post-translational modification N6-(pyridoxal phosphate)lysine.

The protein belongs to the class-III pyridoxal-phosphate-dependent aminotransferase family. HemL subfamily. In terms of assembly, homodimer. Pyridoxal 5'-phosphate is required as a cofactor.

It is found in the cytoplasm. The enzyme catalyses (S)-4-amino-5-oxopentanoate = 5-aminolevulinate. It functions in the pathway porphyrin-containing compound metabolism; protoporphyrin-IX biosynthesis; 5-aminolevulinate from L-glutamyl-tRNA(Glu): step 2/2. The polypeptide is Glutamate-1-semialdehyde 2,1-aminomutase (Ralstonia pickettii (strain 12J)).